Here is a 144-residue protein sequence, read N- to C-terminus: MIAIARQNRVRISPQKARLVCQLIKNKSVIEAQNILVNTDKKGARIILKLLNSVIANATNNHAMLAEKLYVYEVVANQGPTLKRNLPRAKGSADMIRKRSTNFVIKLSDDKNERKHEVEAIKTRLKKRVLGQNKRKQSVSGEKK.

Positions 124–137 are enriched in basic residues; the sequence is RLKKRVLGQNKRKQ. A disordered region spans residues 124–144; that stretch reads RLKKRVLGQNKRKQSVSGEKK.

It belongs to the universal ribosomal protein uL22 family. As to quaternary structure, part of the 50S ribosomal subunit.

Functionally, this protein binds specifically to 23S rRNA; its binding is stimulated by other ribosomal proteins, e.g. L4, L17, and L20. It is important during the early stages of 50S assembly. It makes multiple contacts with different domains of the 23S rRNA in the assembled 50S subunit and ribosome. Its function is as follows. The globular domain of the protein is located near the polypeptide exit tunnel on the outside of the subunit, while an extended beta-hairpin is found that lines the wall of the exit tunnel in the center of the 70S ribosome. The protein is Large ribosomal subunit protein uL22 of Mycoplasmoides gallisepticum (strain R(low / passage 15 / clone 2)) (Mycoplasma gallisepticum).